We begin with the raw amino-acid sequence, 191 residues long: Small ribosomal subunit protein uS5 (191 aa).

Residues 1–20 form a disordered region; that stretch reads MAAERERGGRERSRDREERD. In terms of domain architecture, S5 DRBM spans 23–86; that stretch reads FVDKLVHINR…EAAKRNLTRV (64 aa).

It belongs to the universal ribosomal protein uS5 family. In terms of assembly, part of the 30S ribosomal subunit. Contacts proteins S4 and S8.

With S4 and S12 plays an important role in translational accuracy. In terms of biological role, located at the back of the 30S subunit body where it stabilizes the conformation of the head with respect to the body. In Rhodopseudomonas palustris (strain HaA2), this protein is Small ribosomal subunit protein uS5.